Consider the following 338-residue polypeptide: tRNA N6-adenosine threonylcarbamoyltransferase (338 aa).

Fe cation contacts are provided by histidine 110 and histidine 114. Residues 132 to 136 (VLSGG), aspartate 165, glycine 178, and asparagine 274 contribute to the substrate site. Position 298 (aspartate 298) interacts with Fe cation.

Belongs to the KAE1 / TsaD family. Fe(2+) serves as cofactor.

The protein resides in the cytoplasm. The catalysed reaction is L-threonylcarbamoyladenylate + adenosine(37) in tRNA = N(6)-L-threonylcarbamoyladenosine(37) in tRNA + AMP + H(+). Functionally, required for the formation of a threonylcarbamoyl group on adenosine at position 37 (t(6)A37) in tRNAs that read codons beginning with adenine. Is involved in the transfer of the threonylcarbamoyl moiety of threonylcarbamoyl-AMP (TC-AMP) to the N6 group of A37, together with TsaE and TsaB. TsaD likely plays a direct catalytic role in this reaction. This chain is tRNA N6-adenosine threonylcarbamoyltransferase, found in Borrelia recurrentis (strain A1).